The sequence spans 210 residues: CKLF-like MARVEL transmembrane domain-containing protein 2B (210 aa).

4 consecutive transmembrane segments (helical) span residues phenylalanine 35–methionine 55, proline 65–tyrosine 85, leucine 103–alanine 123, and leucine 127–isoleucine 147. Residues phenylalanine 35–lysine 157 enclose the MARVEL domain.

Belongs to the chemokine-like factor family.

Its subcellular location is the membrane. The sequence is that of CKLF-like MARVEL transmembrane domain-containing protein 2B (Cmtm2b) from Mus musculus (Mouse).